Here is a 129-residue protein sequence, read N- to C-terminus: Small ribosomal subunit protein uS11 (129 aa).

The protein belongs to the universal ribosomal protein uS11 family. In terms of assembly, part of the 30S ribosomal subunit. Interacts with proteins S7 and S18. Binds to IF-3.

Its function is as follows. Located on the platform of the 30S subunit, it bridges several disparate RNA helices of the 16S rRNA. Forms part of the Shine-Dalgarno cleft in the 70S ribosome. The polypeptide is Small ribosomal subunit protein uS11 (Lactobacillus gasseri (strain ATCC 33323 / DSM 20243 / BCRC 14619 / CIP 102991 / JCM 1131 / KCTC 3163 / NCIMB 11718 / NCTC 13722 / AM63)).